Consider the following 365-residue polypeptide: Aminomethyltransferase (365 aa).

Belongs to the GcvT family. The glycine cleavage system is composed of four proteins: P, T, L and H.

It carries out the reaction N(6)-[(R)-S(8)-aminomethyldihydrolipoyl]-L-lysyl-[protein] + (6S)-5,6,7,8-tetrahydrofolate = N(6)-[(R)-dihydrolipoyl]-L-lysyl-[protein] + (6R)-5,10-methylene-5,6,7,8-tetrahydrofolate + NH4(+). In terms of biological role, the glycine cleavage system catalyzes the degradation of glycine. The polypeptide is Aminomethyltransferase (Yersinia pseudotuberculosis serotype O:3 (strain YPIII)).